A 254-amino-acid chain; its full sequence is Nickel import ATP-binding protein NikD (254 aa).

Residues 2-241 form the ABC transporter domain; the sequence is PQQIELRNIA…PKHAVTRSLV (240 aa). Position 36–43 (36–43) interacts with ATP; it reads GGSGSGKS.

Belongs to the ABC transporter superfamily. Nickel importer (TC 3.A.1.5.3) family. In terms of assembly, the complex is composed of two ATP-binding proteins (NikD and NikE), two transmembrane proteins (NikB and NikC) and a solute-binding protein (NikA).

Its subcellular location is the cell inner membrane. The enzyme catalyses Ni(2+)(out) + ATP + H2O = Ni(2+)(in) + ADP + phosphate + H(+). In terms of biological role, part of the ABC transporter complex NikABCDE involved in nickel import. Responsible for energy coupling to the transport system. The protein is Nickel import ATP-binding protein NikD of Escherichia coli (strain UTI89 / UPEC).